The chain runs to 124 residues: Translation initiation factor 5A (124 aa).

The tract at residues 27–53 (TSYSTSKPGKHGSAKARVEGTGVFDGQ) is disordered. Position 36 is a hypusine (K36).

It belongs to the eIF-5A family.

It is found in the cytoplasm. Functions by promoting the formation of the first peptide bond. The sequence is that of Translation initiation factor 5A from Natronomonas pharaonis (strain ATCC 35678 / DSM 2160 / CIP 103997 / JCM 8858 / NBRC 14720 / NCIMB 2260 / Gabara) (Halobacterium pharaonis).